Reading from the N-terminus, the 683-residue chain is Protein kinase C eta type (683 aa).

Residues 1–118 (MSSGTMKFNG…LRTTGASDTF (118 aa)) enclose the C2 domain. A phosphoserine; by autocatalysis mark is found at Ser28 and Ser32. Phorbol-ester/DAG-type zinc fingers lie at residues 171–222 (GHKF…VTAC) and 245–295 (PHKF…APNC). Ser317 carries the phosphoserine modification. The tract at residues 320–342 (SKLVSRSTLRRQGKESSKEGNGI) is disordered. The 260-residue stretch at 355-614 (FEFIRVLGKG…EHAILRHPFF (260 aa)) folds into the Protein kinase domain. Residues 361 to 369 (LGKGSFGKV) and Lys384 contribute to the ATP site. Asp479 functions as the Proton acceptor in the catalytic mechanism. Thr513 bears the Phosphothreonine; by PDPK1 mark. The AGC-kinase C-terminal domain maps to 615 to 683 (KEIDWAQLNH…FSYVSPELQP (69 aa)). Residue Thr656 is modified to Phosphothreonine. The residue at position 675 (Ser675) is a Phosphoserine.

The protein belongs to the protein kinase superfamily. AGC Ser/Thr protein kinase family. PKC subfamily. In terms of assembly, interacts with FYN. Interacts with RALA. Interacts with DGKQ. Interacts with PRKCH upstream open reading frame 2; the interaction leads to inhibition of kinase activity. In terms of tissue distribution, most abundant in lung, less in heart and skin.

The protein localises to the cytoplasm. It carries out the reaction L-seryl-[protein] + ATP = O-phospho-L-seryl-[protein] + ADP + H(+). It catalyses the reaction L-threonyl-[protein] + ATP = O-phospho-L-threonyl-[protein] + ADP + H(+). Its activity is regulated as follows. Novel PKCs (PRKCD, PRKCE, PRKCH and PRKCQ) are calcium-insensitive, but activated by diacylglycerol (DAG) and phosphatidylserine. Three specific sites; Thr-513 (activation loop of the kinase domain), Thr-656 (turn motif) and Ser-675 (hydrophobic region), need to be phosphorylated for its full activation. Inhibited by PRKCH upstream open reading frame 2. In terms of biological role, calcium-independent, phospholipid- and diacylglycerol (DAG)-dependent serine/threonine-protein kinase that is involved in the regulation of cell differentiation in keratinocytes and pre-B cell receptor, mediates regulation of epithelial tight junction integrity and foam cell formation, and is required for glioblastoma proliferation and apoptosis prevention in MCF-7 cells. In keratinocytes, binds and activates the tyrosine kinase FYN, which in turn blocks epidermal growth factor receptor (EGFR) signaling and leads to keratinocyte growth arrest and differentiation. Associates with the cyclin CCNE1-CDK2-CDKN1B complex and inhibits CDK2 kinase activity, leading to RB1 dephosphorylation and thereby G1 arrest in keratinocytes. In association with RALA activates actin depolymerization, which is necessary for keratinocyte differentiation. In the pre-B cell receptor signaling, functions downstream of BLNK by up-regulating IRF4, which in turn activates L chain gene rearrangement. Regulates epithelial tight junctions (TJs) by phosphorylating occludin (OCLN) on threonine residues, which is necessary for the assembly and maintenance of TJs. In association with PLD2 and via TLR4 signaling, is involved in lipopolysaccharide (LPS)-induced RGS2 down-regulation and foam cell formation. Upon PMA stimulation, mediates glioblastoma cell proliferation by activating the mTOR pathway, the PI3K/AKT pathway and the ERK1-dependent phosphorylation of ELK1. Involved in the protection of glioblastoma cells from irradiation-induced apoptosis by preventing caspase-9 activation. In camptothecin-treated MCF-7 cells, regulates NF-kappa-B upstream signaling by activating IKBKB, and confers protection against DNA damage-induced apoptosis. Promotes oncogenic functions of ATF2 in the nucleus while blocking its apoptotic function at mitochondria. Phosphorylates ATF2 which promotes its nuclear retention and transcriptional activity and negatively regulates its mitochondrial localization. This Homo sapiens (Human) protein is Protein kinase C eta type (PRKCH).